Consider the following 595-residue polypeptide: Isoprene synthase, chloroplastic (595 aa).

The transit peptide at 1–37 (MATELLCLHRPISLTHKLFRNPLPKVIQATPLTLKLR) directs the protein to the chloroplast. D345 contributes to the dimethylallyl diphosphate binding site. Mg(2+)-binding residues include D345 and D349. The DDXXD motif motif lies at 345-349 (DDIYD). E423, R486, and N489 together coordinate dimethylallyl diphosphate. Mg(2+) is bound by residues N489, S493, and E497.

Belongs to the terpene synthase family. Tpsb subfamily. In terms of assembly, homodimer. Mg(2+) is required as a cofactor. Requires Mn(2+) as cofactor.

Its subcellular location is the plastid. The protein resides in the chloroplast. The catalysed reaction is dimethylallyl diphosphate = isoprene + diphosphate. It participates in secondary metabolite biosynthesis; terpenoid biosynthesis. With respect to regulation, competitive inhibition is mediated by geranyl diphosphate (GPP). In terms of biological role, lyase that catalyzes the formation of isoprene from dimethylallyl diphosphate via a syn-periplanar elimination mechanism in which the diphosphate-leaving group serves as a general base. The protein is Isoprene synthase, chloroplastic of Populus canescens (Grey poplar).